A 369-amino-acid polypeptide reads, in one-letter code: Muscleblind-like protein 1 (369 aa).

4 consecutive C3H1-type zinc fingers follow at residues 13–41 (WLTL…HPSK), 47–73 (NGRV…HPPP), 178–206 (TDRL…HPAD), and 214–240 (DNTV…HPPA).

This sequence belongs to the muscleblind family.

The protein resides in the nucleus. It localises to the cytoplasm. It is found in the cytoplasmic granule. Its function is as follows. Involved in pre-mRNA alternative splicing regulation. Binds to CUG triplet repeat in RNA. The polypeptide is Muscleblind-like protein 1 (MBNL1) (Gallus gallus (Chicken)).